Consider the following 344-residue polypeptide: MKFLDEAKVYVRSGDGGPGCVSFRREKFIEFGGPNGGDGGRGGDVWIECVQGLNTLIDYRYRQHFKARKGEHGMGSNCHGAKGDDAVLQVPAGTQVFAEDGETLIADMTEVGQRVRLAKGGNGGFGNAYFTTSTNRAPRHANPGQEGQEMWLILRLKLIADAGLVGLPNAGKSTFLATVTAAKPKIADYPFTTLHPGLGVVRSDAREFVLADIPGLIEGAHEGVGLGDRFLAHVERCRVLLHLVEGTSEHAGKAYKLVRRELEAYGGGLADKPEIVALSKADALDPDTLKNQVARLKRAAGGKPLVLSAASGQGVQEALRAIQAQLDGEDAADETAEPAEPWHP.

The Obg domain occupies 1-159; the sequence is MKFLDEAKVY…MWLILRLKLI (159 aa). Positions 160–327 constitute an OBG-type G domain; it reads ADAGLVGLPN…ALRAIQAQLD (168 aa). Residues 166–173, 191–195, 212–215, 279–282, and 308–310 each bind GTP; these read GLPNAGKS, FTTLH, DIPG, SKAD, and SAA. The Mg(2+) site is built by Ser173 and Thr193.

It belongs to the TRAFAC class OBG-HflX-like GTPase superfamily. OBG GTPase family. In terms of assembly, monomer. Mg(2+) serves as cofactor.

The protein resides in the cytoplasm. Its function is as follows. An essential GTPase which binds GTP, GDP and possibly (p)ppGpp with moderate affinity, with high nucleotide exchange rates and a fairly low GTP hydrolysis rate. Plays a role in control of the cell cycle, stress response, ribosome biogenesis and in those bacteria that undergo differentiation, in morphogenesis control. The polypeptide is GTPase Obg (Methylorubrum populi (strain ATCC BAA-705 / NCIMB 13946 / BJ001) (Methylobacterium populi)).